We begin with the raw amino-acid sequence, 351 residues long: Outer membrane porin PhoE (351 aa).

An N-terminal signal peptide occupies residues 1–21; it reads MKKSTLALVVMGITASASVQA.

The protein belongs to the Gram-negative porin family. In terms of assembly, homotrimer.

It localises to the cell outer membrane. Its function is as follows. Uptake of inorganic phosphate, phosphorylated compounds, and some other negatively charged solutes. In Citrobacter freundii, this protein is Outer membrane porin PhoE (phoE).